A 131-amino-acid chain; its full sequence is Small ribosomal subunit protein eS8 (131 aa).

The disordered stretch occupies residues 1-37 (MKLGAFYKGGDLKKPSGGKKRRVRRTKKKALGGGPPQ). The span at 16–30 (SGGKKRRVRRTKKKA) shows a compositional bias: basic residues.

Belongs to the eukaryotic ribosomal protein eS8 family. Part of the 30S ribosomal subunit.

This Pyrobaculum neutrophilum (strain DSM 2338 / JCM 9278 / NBRC 100436 / V24Sta) (Thermoproteus neutrophilus) protein is Small ribosomal subunit protein eS8.